We begin with the raw amino-acid sequence, 551 residues long: Arginine--tRNA ligase (551 aa).

Positions 124–134 (ANPTGPLHIGH) match the 'HIGH' region motif.

The protein belongs to the class-I aminoacyl-tRNA synthetase family. As to quaternary structure, monomer.

It is found in the cytoplasm. The catalysed reaction is tRNA(Arg) + L-arginine + ATP = L-arginyl-tRNA(Arg) + AMP + diphosphate. The chain is Arginine--tRNA ligase from Solidesulfovibrio magneticus (strain ATCC 700980 / DSM 13731 / RS-1) (Desulfovibrio magneticus).